Here is a 359-residue protein sequence, read N- to C-terminus: 4-galactosyl-N-acetylglucosaminide 3-alpha-L-fucosyltransferase FUT6 (359 aa).

The Cytoplasmic segment spans residues 1 to 14; sequence MDPLGPAKTQWSWR. A helical; Signal-anchor for type II membrane protein membrane pass occupies residues 15-34; that stretch reads CCLTALLFQLLVAVCFFSYL. Residues 35 to 359 are Lumenal-facing; the sequence is RVSRDDPTVY…QTRSIAAWFT (325 aa). A determines site-specific fucosylation region spans residues 73–112; sequence KPIALPRCSEMVPGTADCNITADRKVYPQADAVIVHHREV. 3 N-linked (GlcNAc...) asparagine glycosylation sites follow: Asn-91, Asn-153, and Asn-184.

This sequence belongs to the glycosyltransferase 10 family. In terms of assembly, homodimer and monomer. Monomer (secreted form). N-glycosylated. Post-translationally, proteolytic cleavage releases a secreted glycoform of 43 kDa.

It localises to the golgi apparatus. It is found in the golgi stack membrane. The protein resides in the secreted. It carries out the reaction a beta-D-galactosyl-(1-&gt;4)-N-acetyl-beta-D-glucosaminyl derivative + GDP-beta-L-fucose = a beta-D-galactosyl-(1-&gt;4)-[alpha-L-fucosyl-(1-&gt;3)]-N-acetyl-beta-D-glucosaminyl derivative + GDP + H(+). The catalysed reaction is an N-acetyl-alpha-neuraminyl-(2-&gt;3)-beta-D-galactosyl-(1-&gt;4)-N-acetyl-beta-D-glucosaminyl derivative + GDP-beta-L-fucose = an alpha-Neu5Ac-(2-&gt;3)-beta-D-Gal-(1-&gt;4)-[alpha-L-Fuc-(1-&gt;3)]-beta-D-GlcNAc derivative + GDP + H(+). The enzyme catalyses an alpha-Neu5Ac-(2-&gt;3)-beta-D-Gal-(1-&gt;4)-beta-D-GlcNAc-(1-&gt;3)-beta-D-Gal-(1-&gt;4)-[alpha-L-Fuc-(1-&gt;3)]-beta-D-GlcNAc derivative + GDP-beta-L-fucose = an alpha-Neu5Ac-(2-&gt;3)-beta-D-Gal-(1-&gt;4)-[alpha-L-Fuc-(1-&gt;3)]-beta-D-GlcNAc-(1-&gt;3)-beta-D-Gal-(1-&gt;4)-[alpha-L-Fuc-(1-&gt;3)]-beta-D-GlcNAc derivative + GDP + H(+). It catalyses the reaction a neolactoside nLc6Cer + GDP-beta-L-fucose = beta-D-Gal-(1-&gt;4)-[alpha-L-Fuc-(1-&gt;3)]-beta-D-GlcNAc-(1-&gt;3)-beta-D-Gal-(1-&gt;4)-beta-D-GlcNAc-(1-&gt;3)-beta-D-Gal-(1-&gt;4)-beta-D-Glc-(1&lt;-&gt;1')-Cer + GDP + H(+). It carries out the reaction a neolactoside nLc6Cer + GDP-beta-L-fucose = beta-D-galactosyl-(1-&gt;4)-N-acetyl-beta-D-glucosaminyl-(1-&gt;3)-beta-D-galactosyl-(1-&gt;4)-[alpha-L-fucosyl-(1-&gt;3)]-N-acetyl-beta-D-glucosaminyl-(1-&gt;3)-beta-D-galactosyl-(1-&gt;4)-beta-D-glucosyl-(1&lt;-&gt;1')-ceramide + GDP + H(+). The catalysed reaction is a neolactoside VI(3)-alpha-NeuNAc-nLc6Cer + GDP-beta-L-fucose = a neolactoside VI(3)-alpha-NeuAc,V(3)-alphaFuc-nLc6Cer + GDP + H(+). The enzyme catalyses beta-D-galactosyl-(1-&gt;4)-N-acetyl-D-glucosamine + GDP-beta-L-fucose = beta-D-galactosyl-(1-&gt;4)-[alpha-L-fucosyl-(1-&gt;3)]-N-acetyl-D-glucosamine + GDP + H(+). It catalyses the reaction N-acetyl-alpha-neuraminosyl-(2-&gt;3)-beta-D-galactosyl-(1-&gt;4)-N-acetyl-beta-D-glucosamine + GDP-beta-L-fucose = N-acetyl-alpha-neuraminosyl-(2-&gt;3)-beta-D-galactosyl-(1-&gt;4)-[alpha-L-fucosyl-(1-&gt;3)]-N-acetyl-beta-D-glucosamine + GDP + H(+). It carries out the reaction lactose + GDP-beta-L-fucose = beta-D-galactosyl-(1-&gt;4)-[alpha-L-fucosyl-(1-&gt;3)]-D-glucose + GDP + H(+). The catalysed reaction is alpha-L-Fuc-(1-&gt;2)-beta-D-Gal-(1-&gt;4)-D-Glc + GDP-beta-L-fucose = alpha-L-Fuc-(1-&gt;2)-beta-D-Gal-(1-&gt;4)-[alpha-L-Fuc-(1-&gt;3)]-D-Glc + GDP + H(+). The enzyme catalyses a beta-D-galactosyl-(1-&gt;4)-N-acetyl-beta-D-6-sulfooxy-glucosaminyl derivative + GDP-beta-L-fucose = a beta-D-galactosyl-(1-&gt;4)-[alpha-L-fucosyl-(1-&gt;3)]-N-acetyl-beta-D-6-sulfooxy-glucosaminyl derivative + GDP + H(+). It participates in protein modification; protein glycosylation. Catalyzes the transfer of L-fucose, from a guanosine diphosphate-beta-L-fucose, to the N-acetyl glucosamine (GlcNAc) of a distal alpha2,3 sialylated lactosamine unit of a glycoprotein- or glycolipid-linked sialopolylactosamines chain or of a distal or internal lactosamine unit of a neutral glycoprotein- or glycolipid-linked polylactosamines chain through an alpha-1,3 glycosidic linkage and participates in surface expression of the sialyl Lewis X (sLe(x)), Lewis X (Le(x)) and non sialylated VIM2 determinants. Moreover transfers fucose to H-type 2 (Fucalpha1-2Galbeta1-4GlcNAc) chain acceptor substrates and participates in difucosylated sialyl Lewis x determinants. Also fucosylates a polylactosamine substrate having a 6 sulfate modification at the GlcNAc moiety and gives rise to sialyl and non-sialyl 6-sulfo lewis X. Does not have activity towards type 1 ((Galbeta1-3GlcNAc)) and H-type 1 chain (Fucalpha1-2Galbeta1-3GlcNAc) acceptors substrates. The polypeptide is 4-galactosyl-N-acetylglucosaminide 3-alpha-L-fucosyltransferase FUT6 (Pongo pygmaeus (Bornean orangutan)).